A 251-amino-acid polypeptide reads, in one-letter code: Small ribosomal subunit protein uS2 (251 aa).

Belongs to the universal ribosomal protein uS2 family.

The polypeptide is Small ribosomal subunit protein uS2 (Azoarcus sp. (strain BH72)).